The primary structure comprises 287 residues: Protoheme IX farnesyltransferase (287 aa).

The next 8 membrane-spanning stretches (helical) occupy residues 9 to 29, 31 to 51, 94 to 114, 132 to 152, 158 to 178, 202 to 222, 228 to 248, and 267 to 287; these read IVTM…SATL, LIDW…AGAA, IILW…TWLI, VGAI…GGTL, WMLF…IAWL, AWQS…LAWF, VASA…WPLL, and LRWS…RASL.

This sequence belongs to the UbiA prenyltransferase family. Protoheme IX farnesyltransferase subfamily.

It is found in the cell inner membrane. It carries out the reaction heme b + (2E,6E)-farnesyl diphosphate + H2O = Fe(II)-heme o + diphosphate. Its pathway is porphyrin-containing compound metabolism; heme O biosynthesis; heme O from protoheme: step 1/1. Converts heme B (protoheme IX) to heme O by substitution of the vinyl group on carbon 2 of heme B porphyrin ring with a hydroxyethyl farnesyl side group. The protein is Protoheme IX farnesyltransferase of Rhodopirellula baltica (strain DSM 10527 / NCIMB 13988 / SH1).